We begin with the raw amino-acid sequence, 261 residues long: Cytochrome c oxidase subunit 3 (261 aa).

At M1–P15 the chain is on the mitochondrial matrix side. The helical transmembrane segment at W16–W34 threads the bilayer. The Mitochondrial intermembrane portion of the chain corresponds to F35–L40. A helical transmembrane segment spans residues T41–T66. The Mitochondrial matrix segment spans residues F67–T72. The helical transmembrane segment at P73 to S105 threads the bilayer. Over L106 to E128 the chain is Mitochondrial intermembrane. The chain crosses the membrane as a helical span at residues V129–M152. Residues E153 to E155 lie on the Mitochondrial matrix side of the membrane. The chain crosses the membrane as a helical span at residues R156–E183. At A184–D190 the chain is on the mitochondrial intermembrane side. A helical membrane pass occupies residues G191–V223. At Q224–H232 the chain is on the mitochondrial matrix side. Residues F233–I256 form a helical membrane-spanning segment. At Y257–S261 the chain is on the mitochondrial intermembrane side.

This sequence belongs to the cytochrome c oxidase subunit 3 family. Component of the cytochrome c oxidase (complex IV, CIV), a multisubunit enzyme composed of 14 subunits. The complex is composed of a catalytic core of 3 subunits MT-CO1, MT-CO2 and MT-CO3, encoded in the mitochondrial DNA, and 11 supernumerary subunits COX4I, COX5A, COX5B, COX6A, COX6B, COX6C, COX7A, COX7B, COX7C, COX8 and NDUFA4, which are encoded in the nuclear genome. The complex exists as a monomer or a dimer and forms supercomplexes (SCs) in the inner mitochondrial membrane with NADH-ubiquinone oxidoreductase (complex I, CI) and ubiquinol-cytochrome c oxidoreductase (cytochrome b-c1 complex, complex III, CIII), resulting in different assemblies (supercomplex SCI(1)III(2)IV(1) and megacomplex MCI(2)III(2)IV(2)).

The protein resides in the mitochondrion inner membrane. The enzyme catalyses 4 Fe(II)-[cytochrome c] + O2 + 8 H(+)(in) = 4 Fe(III)-[cytochrome c] + 2 H2O + 4 H(+)(out). Functionally, component of the cytochrome c oxidase, the last enzyme in the mitochondrial electron transport chain which drives oxidative phosphorylation. The respiratory chain contains 3 multisubunit complexes succinate dehydrogenase (complex II, CII), ubiquinol-cytochrome c oxidoreductase (cytochrome b-c1 complex, complex III, CIII) and cytochrome c oxidase (complex IV, CIV), that cooperate to transfer electrons derived from NADH and succinate to molecular oxygen, creating an electrochemical gradient over the inner membrane that drives transmembrane transport and the ATP synthase. Cytochrome c oxidase is the component of the respiratory chain that catalyzes the reduction of oxygen to water. Electrons originating from reduced cytochrome c in the intermembrane space (IMS) are transferred via the dinuclear copper A center (CU(A)) of subunit 2 and heme A of subunit 1 to the active site in subunit 1, a binuclear center (BNC) formed by heme A3 and copper B (CU(B)). The BNC reduces molecular oxygen to 2 water molecules using 4 electrons from cytochrome c in the IMS and 4 protons from the mitochondrial matrix. The chain is Cytochrome c oxidase subunit 3 (mt-co3) from Oncorhynchus clarkii (Cutthroat trout).